Consider the following 429-residue polypeptide: SET domain-containing protein 14 (429 aa).

8 residues coordinate Zn(2+): Cys-26, Cys-29, Cys-39, Cys-42, Cys-48, Cys-52, His-60, and Cys-64. An MYND-type zinc finger spans residues 26–64 (CNQCLTSMAELKKCSACRRLAYCSQECQRADWKLHKVEC).

The protein localises to the nucleus. This is SET domain-containing protein 14 (set-14) from Caenorhabditis elegans.